The sequence spans 419 residues: Tyrosine--tRNA ligase (419 aa).

Tyr-36 serves as a coordination point for L-tyrosine. Residues Pro-41–His-50 carry the 'HIGH' region motif. Positions 168 and 172 each coordinate L-tyrosine. The 'KMSKS' region signature appears at Lys-230 to Thr-234. Lys-233 lines the ATP pocket. The region spanning Lys-352–Lys-419 is the S4 RNA-binding domain.

The protein belongs to the class-I aminoacyl-tRNA synthetase family. TyrS type 1 subfamily. As to quaternary structure, homodimer.

It is found in the cytoplasm. The enzyme catalyses tRNA(Tyr) + L-tyrosine + ATP = L-tyrosyl-tRNA(Tyr) + AMP + diphosphate + H(+). In terms of biological role, catalyzes the attachment of tyrosine to tRNA(Tyr) in a two-step reaction: tyrosine is first activated by ATP to form Tyr-AMP and then transferred to the acceptor end of tRNA(Tyr). The polypeptide is Tyrosine--tRNA ligase (Latilactobacillus sakei subsp. sakei (strain 23K) (Lactobacillus sakei subsp. sakei)).